A 112-amino-acid polypeptide reads, in one-letter code: NADH-quinone oxidoreductase subunit K (112 aa).

3 helical membrane passes run 14 to 34, 39 to 59, and 76 to 96; these read LEGY…GALI, VVVF…LVAF, and LIIA…LAIF.

It belongs to the complex I subunit 4L family. In terms of assembly, NDH-1 is composed of 14 different subunits. Subunits NuoA, H, J, K, L, M, N constitute the membrane sector of the complex.

It is found in the cell membrane. The catalysed reaction is a quinone + NADH + 5 H(+)(in) = a quinol + NAD(+) + 4 H(+)(out). Functionally, NDH-1 shuttles electrons from NADH, via FMN and iron-sulfur (Fe-S) centers, to quinones in the respiratory chain. The immediate electron acceptor for the enzyme in this species is believed to be a menaquinone. Couples the redox reaction to proton translocation (for every two electrons transferred, four hydrogen ions are translocated across the cytoplasmic membrane), and thus conserves the redox energy in a proton gradient. This Rubrobacter xylanophilus (strain DSM 9941 / JCM 11954 / NBRC 16129 / PRD-1) protein is NADH-quinone oxidoreductase subunit K.